The primary structure comprises 201 residues: Transgelin (201 aa).

Ala-2 bears the N-acetylalanine mark. The 114-residue stretch at 24–137 (EELEERLVEW…RTLMALGSLA (114 aa)) folds into the Calponin-homology (CH) domain. Ser-166 carries the post-translational modification Phosphoserine. At Lys-172 the chain carries N6-acetyllysine. Residues 175–200 (IGLQMGSNRGASQAGMTGYGRPRQII) form a Calponin-like repeat. Position 181 is a phosphoserine (Ser-181). Arg-183 is subject to Omega-N-methylarginine.

It belongs to the calponin family.

Its subcellular location is the cytoplasm. Functionally, actin cross-linking/gelling protein. Involved in calcium interactions and contractile properties of the cell that may contribute to replicative senescence. This chain is Transgelin (TAGLN), found in Homo sapiens (Human).